The sequence spans 194 residues: Molybdenum cofactor guanylyltransferase (194 aa).

GTP is bound by residues 12–14, lysine 25, asparagine 53, aspartate 70, and aspartate 100; that span reads LAG. Aspartate 100 contacts Mg(2+).

Belongs to the MobA family. In terms of assembly, monomer. It depends on Mg(2+) as a cofactor.

The protein localises to the cytoplasm. It catalyses the reaction Mo-molybdopterin + GTP + H(+) = Mo-molybdopterin guanine dinucleotide + diphosphate. Functionally, transfers a GMP moiety from GTP to Mo-molybdopterin (Mo-MPT) cofactor (Moco or molybdenum cofactor) to form Mo-molybdopterin guanine dinucleotide (Mo-MGD) cofactor. The sequence is that of Molybdenum cofactor guanylyltransferase from Photobacterium profundum (strain SS9).